The sequence spans 310 residues: Homoserine O-acetyltransferase (310 aa).

C142 (acyl-thioester intermediate) is an active-site residue. Positions 163 and 192 each coordinate substrate. H235 serves as the catalytic Proton acceptor. E237 is a catalytic residue. Residue R249 coordinates substrate.

It belongs to the MetA family.

Its subcellular location is the cytoplasm. The enzyme catalyses L-homoserine + acetyl-CoA = O-acetyl-L-homoserine + CoA. Its pathway is amino-acid biosynthesis; L-methionine biosynthesis via de novo pathway; O-acetyl-L-homoserine from L-homoserine: step 1/1. Functionally, transfers an acetyl group from acetyl-CoA to L-homoserine, forming acetyl-L-homoserine. This chain is Homoserine O-acetyltransferase, found in Lachnospira eligens (strain ATCC 27750 / DSM 3376 / VPI C15-48 / C15-B4) (Eubacterium eligens).